Here is a 376-residue protein sequence, read N- to C-terminus: DNA repair protein RAD51 homolog 3 (376 aa).

Residues 1 to 126 form a required for Holliday junction resolution activity region; sequence MRGKTFRFEM…LMKTTEICGA (126 aa). S20 is subject to Phosphoserine. The tract at residues 79–136 is interaction with RAD51B, RAD51D and XRCC3; it reads SESHKKCTALELLEQEHTQGFIITFCSALDDILGGGVPLMKTTEICGAPGVGKTQLCM. ATP is bound at residue 125–132; sequence GAPGVGKT. The Nuclear localization signal signature appears at 366-370; it reads RKRSR.

Belongs to the RecA family. RAD51 subfamily. As to quaternary structure, part of the RAD51 paralog protein complexes BCDX2 and CX3; the complexes have a ring-like structure arranged into a flat disc around a central channel. The BCDX2 complex consits of RAD51B, RAD51C, RAD51D and XRCC2; the CX3 complex consists of RAD51C and XRCC3. The BCDX2 subcomplex RAD51B:RAD51C interacts with RAD51. Interacts with SWSAP1; involved in homologous recombination repair. Interacts directly with PALB2 which may serve as a scaffold for a HR complex containing PALB2, BRCA2, RAD51C, RAD51 and XRCC3. Interacts with HELQ. Interacts with DNA damage up-regulated protein DDUP. Expressed in a variety of tissues, with highest expression in testis, heart muscle, spleen and prostate.

The protein localises to the nucleus. The protein resides in the cytoplasm. It is found in the perinuclear region. Its subcellular location is the mitochondrion. In terms of biological role, essential for the homologous recombination (HR) pathway of DNA repair. Involved in the homologous recombination repair (HRR) pathway of double-stranded DNA breaks arising during DNA replication or induced by DNA-damaging agents. Part of the RAD51 paralog protein complexes BCDX2 and CX3 which act at different stages of the BRCA1-BRCA2-dependent HR pathway. Upon DNA damage, BCDX2 seems to act downstream of BRCA2 recruitment and upstream of RAD51 recruitment; CX3 seems to act downstream of RAD51 recruitment; both complexes bind predominantly to the intersection of the four duplex arms of the Holliday junction (HJ) and to junction of replication forks. The BCDX2 complex was originally reported to bind single-stranded DNA, single-stranded gaps in duplex DNA and specifically to nicks in duplex DNA. The BCDX2 subcomplex RAD51B:RAD51C exhibits single-stranded DNA-dependent ATPase activity suggesting an involvement in early stages of the HR pathway. Involved in RAD51 foci formation in response to DNA damage suggesting an involvement in early stages of HR probably in the invasion step. Has an early function in DNA repair in facilitating phosphorylation of the checkpoint kinase CHEK2 and thereby transduction of the damage signal, leading to cell cycle arrest and HR activation. Participates in branch migration and HJ resolution and thus is important for processing HR intermediates late in the DNA repair process; the function may be linked to the CX3 complex. Part of a PALB2-scaffolded HR complex containing BRCA2 and which is thought to play a role in DNA repair by HR. Protects RAD51 from ubiquitin-mediated degradation that is enhanced following DNA damage. Plays a role in regulating mitochondrial DNA copy number under conditions of oxidative stress in the presence of RAD51 and XRCC3. Contributes to DNA cross-link resistance, sister chromatid cohesion and genomic stability. Involved in maintaining centrosome number in mitosis. In Homo sapiens (Human), this protein is DNA repair protein RAD51 homolog 3 (RAD51C).